Consider the following 175-residue polypeptide: uncharacterized protein (175 aa).

The Extracellular portion of the chain corresponds to 1 to 2 (ME). Residues 3–23 (SIILSIAIFIGVLLGTSVGAG) traverse the membrane as a helical segment. At 24–151 (SGSSISPDVD…TGISTTMNAR (128 aa)) the chain is on the cytoplasmic side. The segment at 26 to 88 (SSISPDVDAG…DVGAGSGSSI (63 aa)) is disordered. Residues 59–78 (FSGSSTSPDVDAGSGSSTSP) show a composition bias toward polar residues. The helical transmembrane segment at 152-172 (VAVLITAAILSAPVTAIALLE) threads the bilayer. The Extracellular portion of the chain corresponds to 173–175 (ARR).

It is found in the membrane. This is an uncharacterized protein from Saccharomyces cerevisiae (strain ATCC 204508 / S288c) (Baker's yeast).